A 476-amino-acid polypeptide reads, in one-letter code: MDWAEKYRPMHLADILGNGSAVRQIVDWAKTWTPDSRPLLFTGKPGIGKTSAALALARDMDWEVLELNASDARTKTIIERVAGNSSTTTSLFGAGRKLIIIDEVDNLEGNADRGGARAIADILKEAKQPIVLIANDAYGVSDSIRRLCDPVPFRAIGVSTLQKRMKEICRFEDIACGEDALSAIAESSAGDMRTAVNMLFGSSTGKTSISVGDINTAQKDERATIFDLVGGVFAGAPDRELQKLSFECDEKPDSVMQWIEESIPLMHDPKRRIRAYGRISRADVYLGRTMRRQYFTLWRYATSMMTLGVASENAGAGFRTRIMPPSRWKRMSTAKKQKTVRRTLAASLAEGYSIPERQIQSEYLDLLSRFAEKDPAAFCERHNLDVDQMGIILHDKAAAAAAVKTVQQAAKERDMKVKKMAASKKAEMRKLEEQLEALRMQEPPVPETPPAAEEQPLEEPQEEKKLAPKQATLDFF.

43 to 50 (GKPGIGKT) serves as a coordination point for ATP. The interval 435–476 (LEALRMQEPPVPETPPAAEEQPLEEPQEEKKLAPKQATLDFF) is disordered.

The protein belongs to the activator 1 small subunits family. RfcL subfamily. In terms of assembly, heteromultimer composed of small subunits (RfcS) and large subunits (RfcL).

Its function is as follows. Part of the RFC clamp loader complex which loads the PCNA sliding clamp onto DNA. The protein is Replication factor C large subunit of Methanocorpusculum labreanum (strain ATCC 43576 / DSM 4855 / Z).